The chain runs to 337 residues: DNA-directed RNA polymerase subunit alpha (337 aa).

Residues 1-233 (MIQKNWQELI…DQLSIFVNFE (233 aa)) form an alpha N-terminal domain (alpha-NTD) region. An alpha C-terminal domain (alpha-CTD) region spans residues 249–337 (FNPALLKKVD…DLAKRYEDQY (89 aa)).

Belongs to the RNA polymerase alpha chain family. As to quaternary structure, homodimer. The RNAP catalytic core consists of 2 alpha, 1 beta, 1 beta' and 1 omega subunit. When a sigma factor is associated with the core the holoenzyme is formed, which can initiate transcription.

The catalysed reaction is RNA(n) + a ribonucleoside 5'-triphosphate = RNA(n+1) + diphosphate. Functionally, DNA-dependent RNA polymerase catalyzes the transcription of DNA into RNA using the four ribonucleoside triphosphates as substrates. This chain is DNA-directed RNA polymerase subunit alpha, found in Brucella melitensis biotype 2 (strain ATCC 23457).